The chain runs to 155 residues: Regulatory protein RecX (155 aa).

The protein belongs to the RecX family.

The protein localises to the cytoplasm. Functionally, modulates RecA activity. The protein is Regulatory protein RecX of Pseudomonas entomophila (strain L48).